The chain runs to 265 residues: Mlc titration factor A (265 aa).

Positions 111, 148, 152, and 211 each coordinate Zn(2+).

The protein belongs to the MtfA family. As to quaternary structure, interacts with Mlc. Requires Zn(2+) as cofactor.

It localises to the cytoplasm. Involved in the modulation of the activity of the glucose-phosphotransferase system (glucose-PTS). Interacts with the transcriptional repressor Mlc, preventing its interaction with DNA and leading to the modulation of expression of genes regulated by Mlc, including ptsG, which encodes the PTS system glucose-specific EIICB component. Its function is as follows. Shows zinc-dependent metallopeptidase activity. The polypeptide is Mlc titration factor A (Escherichia coli O9:H4 (strain HS)).